The following is a 76-amino-acid chain: Omega-scoloptoxin(15)-Ssd3c (76 aa).

A signal peptide spans 1 to 23 (MEKKIIFLVVLVALLALPEFISS).

This sequence belongs to the scoloptoxin-15 family. In terms of processing, contains 2 disulfide bonds. As to expression, expressed by the venom gland.

Its subcellular location is the secreted. In terms of biological role, voltage-gated calcium channel inhibitor (Cav) (8.6% block at 10 nM), when tested on DRG neurons. The polypeptide is Omega-scoloptoxin(15)-Ssd3c (Scolopendra dehaani (Thai centipede)).